The sequence spans 453 residues: Tubulin beta-1 chain (453 aa).

GTP contacts are provided by Q12, E71, S140, G144, T145, G146, N206, and N228. E71 provides a ligand contact to Mg(2+). A disordered region spans residues 431–453 (TADGVEGYEEEGYENDHPEDDEE). Residues 436 to 453 (EGYEEEGYENDHPEDDEE) show a composition bias toward acidic residues.

It belongs to the tubulin family. Dimer of alpha and beta chains. A typical microtubule is a hollow water-filled tube with an outer diameter of 25 nm and an inner diameter of 15 nM. Alpha-beta heterodimers associate head-to-tail to form protofilaments running lengthwise along the microtubule wall with the beta-tubulin subunit facing the microtubule plus end conferring a structural polarity. Microtubules usually have 13 protofilaments but different protofilament numbers can be found in some organisms and specialized cells. Requires Mg(2+) as cofactor.

The protein resides in the cytoplasm. It localises to the cytoskeleton. Its function is as follows. Tubulin is the major constituent of microtubules, a cylinder consisting of laterally associated linear protofilaments composed of alpha- and beta-tubulin heterodimers. Microtubules grow by the addition of GTP-tubulin dimers to the microtubule end, where a stabilizing cap forms. Below the cap, tubulin dimers are in GDP-bound state, owing to GTPase activity of alpha-tubulin. In Chondrus crispus (Carrageen Irish moss), this protein is Tubulin beta-1 chain (TUBB).